Consider the following 521-residue polypeptide: GMP synthase [glutamine-hydrolyzing] (521 aa).

The region spanning 5–197 (KILILDFGSQ…VLDICGAQPG (193 aa)) is the Glutamine amidotransferase type-1 domain. Catalysis depends on Cys81, which acts as the Nucleophile. Active-site residues include His171 and Glu173. The region spanning 198-390 (WTMPNYIEEA…LGLPREMVYR (193 aa)) is the GMPS ATP-PPase domain. An ATP-binding site is contributed by 225 to 231 (SGGVDSS).

As to quaternary structure, homodimer.

It catalyses the reaction XMP + L-glutamine + ATP + H2O = GMP + L-glutamate + AMP + diphosphate + 2 H(+). The protein operates within purine metabolism; GMP biosynthesis; GMP from XMP (L-Gln route): step 1/1. Its function is as follows. Catalyzes the synthesis of GMP from XMP. This is GMP synthase [glutamine-hydrolyzing] from Neisseria meningitidis serogroup C (strain 053442).